Reading from the N-terminus, the 371-residue chain is Transaldolase (371 aa).

The active-site Schiff-base intermediate with substrate is the lysine 140.

Belongs to the transaldolase family. Type 2 subfamily.

It is found in the cytoplasm. The enzyme catalyses D-sedoheptulose 7-phosphate + D-glyceraldehyde 3-phosphate = D-erythrose 4-phosphate + beta-D-fructose 6-phosphate. It functions in the pathway carbohydrate degradation; pentose phosphate pathway; D-glyceraldehyde 3-phosphate and beta-D-fructose 6-phosphate from D-ribose 5-phosphate and D-xylulose 5-phosphate (non-oxidative stage): step 2/3. In terms of biological role, transaldolase is important for the balance of metabolites in the pentose-phosphate pathway. The polypeptide is Transaldolase (Arthrobacter sp. (strain FB24)).